A 354-amino-acid chain; its full sequence is Malate dehydrogenase 1, peroxisomal (354 aa).

A peroxisomal targeting signal PTS2 region spans residues R6–L14. NAD(+) contacts are provided by residues G49 to G55 and D75. R122 and R128 together coordinate substrate. NAD(+)-binding positions include N135 and I158 to N160. Substrate-binding residues include N160 and R194. H218 (proton acceptor) is an active-site residue. M269 lines the NAD(+) pocket.

It belongs to the LDH/MDH superfamily. MDH type 1 family. Homodimer. Expressed in rosette leaves at low levels.

It localises to the peroxisome. It carries out the reaction (S)-malate + NAD(+) = oxaloacetate + NADH + H(+). Functionally, catalyzes a reversible NAD-dependent dehydrogenase reaction involved in central metabolism and redox homeostasis between organelle compartments. Peroxisomal NAD-dependent malate dehydrogenase involved in fatty acid beta-oxidation. Reoxidizes NADH from the beta-oxidation and provides NAD for the conversion of fatty acyl-CoA to acetyl-CoA. Does not participate directly in the glyoxylate cycle. Required for maintenance of photosynthetic rates under photorespiratory conditions, and carbon flow during photorespiration. Supplies NADH reductant to the peroxisomal hydroxypyruvate reductase (HPR), which reduces hydroxypyruvate into glycerate in the photorespiratory cycle. This Arabidopsis thaliana (Mouse-ear cress) protein is Malate dehydrogenase 1, peroxisomal.